The following is a 623-amino-acid chain: Chaperone protein DnaK (623 aa).

Threonine 174 carries the post-translational modification Phosphothreonine; by autocatalysis. Disordered stretches follow at residues 470–504 and 578–623; these read ITIK…KEEV and GGAQ…DPDK. Positions 481-504 are enriched in basic and acidic residues; it reads EEIKKMQKDAEEHAEEDKKRKEEV. A compositionally biased stretch (low complexity) spans 578–604; the sequence is GGAQGAAGQAGPQGAQGGQPNNDNGSS. Basic and acidic residues predominate over residues 614–623; it reads GDFHKVDPDK.

Belongs to the heat shock protein 70 family.

In terms of biological role, acts as a chaperone. The sequence is that of Chaperone protein DnaK from Lactobacillus gasseri (strain ATCC 33323 / DSM 20243 / BCRC 14619 / CIP 102991 / JCM 1131 / KCTC 3163 / NCIMB 11718 / NCTC 13722 / AM63).